We begin with the raw amino-acid sequence, 217 residues long: Adenylate kinase (217 aa).

10 to 15 (GAGKGT) contacts ATP. An NMP region spans residues 30–59 (STGDMFREAIKRGTPLGRQAEVYIKGGRLV). Residues Thr-31, Arg-36, 57 to 59 (RLV), 85 to 88 (GFPR), and Gln-92 each bind AMP. The interval 126–163 (GRRVCRQCGATYHVRYNPPAVPGKCDACGQDLVQRADD) is LID. Arg-127 lines the ATP pocket. Zn(2+)-binding residues include Cys-130 and Cys-133. 136–137 (TY) lines the ATP pocket. Positions 150 and 153 each coordinate Zn(2+). AMP is bound by residues Arg-160 and Arg-171. Gln-199 is an ATP binding site.

The protein belongs to the adenylate kinase family. As to quaternary structure, monomer.

The protein resides in the cytoplasm. It catalyses the reaction AMP + ATP = 2 ADP. It participates in purine metabolism; AMP biosynthesis via salvage pathway; AMP from ADP: step 1/1. Functionally, catalyzes the reversible transfer of the terminal phosphate group between ATP and AMP. Plays an important role in cellular energy homeostasis and in adenine nucleotide metabolism. The protein is Adenylate kinase of Moorella thermoacetica (strain ATCC 39073 / JCM 9320).